A 557-amino-acid polypeptide reads, in one-letter code: Dihydroxy-acid dehydratase (557 aa).

Cys50 serves as a coordination point for [2Fe-2S] cluster. Asp82 contacts Mg(2+). Cys123 contributes to the [2Fe-2S] cluster binding site. The Mg(2+) site is built by Asp124 and Lys125. At Lys125 the chain carries N6-carboxylysine. Cys195 is a binding site for [2Fe-2S] cluster. Glu447 provides a ligand contact to Mg(2+). Ser473 functions as the Proton acceptor in the catalytic mechanism.

It belongs to the IlvD/Edd family. Homodimer. The cofactor is [2Fe-2S] cluster. Mg(2+) is required as a cofactor.

The catalysed reaction is (2R)-2,3-dihydroxy-3-methylbutanoate = 3-methyl-2-oxobutanoate + H2O. It catalyses the reaction (2R,3R)-2,3-dihydroxy-3-methylpentanoate = (S)-3-methyl-2-oxopentanoate + H2O. It functions in the pathway amino-acid biosynthesis; L-isoleucine biosynthesis; L-isoleucine from 2-oxobutanoate: step 3/4. Its pathway is amino-acid biosynthesis; L-valine biosynthesis; L-valine from pyruvate: step 3/4. Functionally, functions in the biosynthesis of branched-chain amino acids. Catalyzes the dehydration of (2R,3R)-2,3-dihydroxy-3-methylpentanoate (2,3-dihydroxy-3-methylvalerate) into 2-oxo-3-methylpentanoate (2-oxo-3-methylvalerate) and of (2R)-2,3-dihydroxy-3-methylbutanoate (2,3-dihydroxyisovalerate) into 2-oxo-3-methylbutanoate (2-oxoisovalerate), the penultimate precursor to L-isoleucine and L-valine, respectively. The polypeptide is Dihydroxy-acid dehydratase (Nitrosomonas europaea (strain ATCC 19718 / CIP 103999 / KCTC 2705 / NBRC 14298)).